The sequence spans 120 residues: Large ribosomal subunit protein uL18 (120 aa).

This sequence belongs to the universal ribosomal protein uL18 family. In terms of assembly, part of the 50S ribosomal subunit; part of the 5S rRNA/L5/L18/L25 subcomplex. Contacts the 5S and 23S rRNAs.

Functionally, this is one of the proteins that bind and probably mediate the attachment of the 5S RNA into the large ribosomal subunit, where it forms part of the central protuberance. This Herminiimonas arsenicoxydans protein is Large ribosomal subunit protein uL18.